A 121-amino-acid chain; its full sequence is Large ribosomal subunit protein bL12 (121 aa).

The protein belongs to the bacterial ribosomal protein bL12 family. In terms of assembly, homodimer. Part of the ribosomal stalk of the 50S ribosomal subunit. Forms a multimeric L10(L12)X complex, where L10 forms an elongated spine to which 2 to 4 L12 dimers bind in a sequential fashion. Binds GTP-bound translation factors.

In terms of biological role, forms part of the ribosomal stalk which helps the ribosome interact with GTP-bound translation factors. Is thus essential for accurate translation. The polypeptide is Large ribosomal subunit protein bL12 (Clostridioides difficile (strain 630) (Peptoclostridium difficile)).